We begin with the raw amino-acid sequence, 510 residues long: 2,3-bisphosphoglycerate-independent phosphoglycerate mutase (510 aa).

Asp12 and Ser62 together coordinate Mn(2+). Ser62 (phosphoserine intermediate) is an active-site residue. Residues His123, 153 to 154 (RD), Arg185, Arg191, 260 to 263 (RPDR), and Lys335 contribute to the substrate site. Residues Asp402, His406, Asp443, His444, and His461 each contribute to the Mn(2+) site.

Belongs to the BPG-independent phosphoglycerate mutase family. In terms of assembly, monomer. Mn(2+) is required as a cofactor.

It carries out the reaction (2R)-2-phosphoglycerate = (2R)-3-phosphoglycerate. The protein operates within carbohydrate degradation; glycolysis; pyruvate from D-glyceraldehyde 3-phosphate: step 3/5. Its function is as follows. Catalyzes the interconversion of 2-phosphoglycerate and 3-phosphoglycerate. The sequence is that of 2,3-bisphosphoglycerate-independent phosphoglycerate mutase from Listeria innocua serovar 6a (strain ATCC BAA-680 / CLIP 11262).